We begin with the raw amino-acid sequence, 212 residues long: Peroxisomal membrane protein 4 (212 aa).

An N-linked (GlcNAc...) asparagine glycan is attached at N57. A run of 2 helical transmembrane segments spans residues 97-117 (GKTY…LVFG) and 153-173 (WDPF…LFEY). N206 is a glycosylation site (N-linked (GlcNAc...) asparagine).

It belongs to the peroxisomal membrane protein PXMP2/4 family. As to quaternary structure, interacts with PEX19. Expressed in normal prostate epithelial cells, and androgen-sensitive prostate adenocarcinoma cells. Not expressed in androgen-insensitive prostate adenocarcinoma cells.

Its subcellular location is the peroxisome membrane. The protein is Peroxisomal membrane protein 4 (PXMP4) of Homo sapiens (Human).